The following is a 1355-amino-acid chain: Patatin-like phospholipase domain-containing protein 6 (1355 aa).

The Lumenal portion of the chain corresponds to 1 to 43 (MGTPSHELNTTSSGAEVIQKTLEEGLGRRICVAQPVPFVPQVL). Residue Asn-9 is glycosylated (N-linked (GlcNAc...) asparagine). Residues 44–64 (GVMIGAGVAVLVTAVLILLVV) traverse the membrane as a helical segment. Residues 65–1355 (RRLRVQKTPA…QETPSSVADA (1291 aa)) are Cytoplasmic-facing. An a nucleoside 3',5'-cyclic phosphate-binding site is contributed by 179–306 (VLGHFEKPLF…VRVVQIIMVR (128 aa)). Phosphoserine is present on Ser-338. Positions 338-395 (SPGLPTRTSPVRGSKRVVSTSGTEDTSKETSGRPLDSIGAPLPGPAGDPVKPTSLEAP) are disordered. A compositionally biased stretch (polar residues) spans 343 to 361 (TRTSPVRGSKRVVSTSGTE). Phosphothreonine is present on Thr-345. Phosphoserine is present on residues Ser-346, Ser-356, and Ser-405. A nucleoside 3',5'-cyclic phosphate-binding positions include 492 to 614 (ELAK…VAAR) and 610 to 730 (TVAA…LSQK). Residues 961–1127 (LVLGGGGARG…INNLPADIAR (167 aa)) form the PNPLA domain. Positions 965–970 (GGGARG) match the GXGXXG motif. The GXSXG signature appears at 992-996 (GTSIG). Ser-994 acts as the Nucleophile in catalysis. Residue Asp-1114 is the Proton acceptor of the active site. Positions 1114–1116 (DGG) match the DGA/G motif. Residues 1286–1355 (SYVSDGCADG…QETPSSVADA (70 aa)) form a disordered region. A compositionally biased stretch (acidic residues) spans 1293-1309 (ADGEESDCLTEYEEDAG).

It belongs to the NTE family. Post-translationally, glycosylated. Expressed in brain, testes and kidney (at protein level). Expressed ubiquitously in brain of young mice. Reaching adulthood, there is a most prominent expression in Purkinje cells, granule cells and pyramidal neurons of the hippocampus and some large neurons in the medulla oblongata, nucleus dentatus and pons.

It localises to the endoplasmic reticulum membrane. It carries out the reaction a 1-acyl-sn-glycero-3-phosphocholine + H2O = sn-glycerol 3-phosphocholine + a fatty acid + H(+). It catalyses the reaction 1-hexadecanoyl-sn-glycero-3-phosphocholine + H2O = sn-glycerol 3-phosphocholine + hexadecanoate + H(+). The catalysed reaction is 1-hexadecanoyl-sn-glycero-3-phosphate + H2O = sn-glycerol 3-phosphate + hexadecanoate + H(+). The enzyme catalyses 1-(9Z-octadecenoyl)-sn-glycero-3-phosphocholine + H2O = sn-glycerol 3-phosphocholine + (9Z)-octadecenoate + H(+). It carries out the reaction 1-hexadecanoylglycerol + H2O = glycerol + hexadecanoate + H(+). It catalyses the reaction 2-hexadecanoylglycerol + H2O = glycerol + hexadecanoate + H(+). The catalysed reaction is 1-(9Z-octadecenoyl)-glycerol + H2O = glycerol + (9Z)-octadecenoate + H(+). The enzyme catalyses 2-(9Z-octadecenoyl)-glycerol + H2O = glycerol + (9Z)-octadecenoate + H(+). It carries out the reaction 2-(5Z,8Z,11Z,14Z-eicosatetraenoyl)-glycerol + H2O = glycerol + (5Z,8Z,11Z,14Z)-eicosatetraenoate + H(+). Its activity is regulated as follows. Inhibited by a series a OPs such as mipafox (MPX), phenyl saligenin phosphate (PSP), phenyl dipentyl phosphinate (PDPP), diisopropyl fluorophosphate and paraoxon. Phospholipase B that deacylates intracellular phosphatidylcholine (PtdCho), generating glycerophosphocholine (GroPtdCho). This deacylation occurs at both sn-2 and sn-1 positions of PtdCho. Catalyzes the hydrolysis of several naturally occurring membrane-associated lipids. Hydrolyzes lysophospholipids and monoacylglycerols, preferring the 1-acyl to the 2-acyl isomer. Does not catalyze hydrolysis of di- or triacylglycerols or fatty acid amides. In Mus musculus (Mouse), this protein is Patatin-like phospholipase domain-containing protein 6 (Pnpla6).